The primary structure comprises 113 residues: Large ribosomal subunit protein uL22 (113 aa).

It belongs to the universal ribosomal protein uL22 family. Part of the 50S ribosomal subunit.

In terms of biological role, this protein binds specifically to 23S rRNA; its binding is stimulated by other ribosomal proteins, e.g. L4, L17, and L20. It is important during the early stages of 50S assembly. It makes multiple contacts with different domains of the 23S rRNA in the assembled 50S subunit and ribosome. The globular domain of the protein is located near the polypeptide exit tunnel on the outside of the subunit, while an extended beta-hairpin is found that lines the wall of the exit tunnel in the center of the 70S ribosome. In Desulforudis audaxviator (strain MP104C), this protein is Large ribosomal subunit protein uL22.